We begin with the raw amino-acid sequence, 411 residues long: MSDSLAGNGMRQNLNRSSTSSNHTGHAQNGRAPQDPLVDAGHFIKQLACQVQSLACLKWLSELQILACIPLEGSRPLHDVAELANVPASQLSRVVRIVATIGFLNEPDPGHIAHTALSAQFVVDFSLFDSILFLLTTVVPCSMQMSTLTQRHGSAFPTNDGAYRIAFNTSQSFDAACVEGSRLRREWLAYKSNTTIVDETIADVLLRQDWHSLGHVKVVDACAQSTDFGNSLAERCSTLRVVVQLDTATTNGHSEIDSSMSRGRAVIQRRPQGTRQMVEDAAVCILKIEAPSTTIRARVTAELLAHLEVLRNNESAVLIVAAPLLPEPGTVSTSAEASARSSDLTTLQLSNSPQLELDRLIDIVENVPNARDSLKVVQRILFRNGMVAAIEVRYRASSEDQFATPAGTIDW.

Polar residues predominate over residues 1 to 27 (MSDSLAGNGMRQNLNRSSTSSNHTGHA). The tract at residues 1-32 (MSDSLAGNGMRQNLNRSSTSSNHTGHAQNGRA) is disordered. In terms of domain architecture, HTH iclR-type spans 47–117 (LACQVQSLAC…DPGHIAHTAL (71 aa)). The segment at residues 77 to 96 (LHDVAELANVPASQLSRVVR) is a DNA-binding region (H-T-H motif).

The protein localises to the nucleus. Transcriptional coactivator; part of the gene cluster that mediates the biosynthesis of cladofulvin, a conidial pigment not required for virulence but that plays a role in fitness and resistance to environmental stresses including UV light and low-temperature stress. With claE, coregulates the production of cladofulvin. The sequence is that of Cladofulvin cluster transcriptional coactivator claA from Passalora fulva (Tomato leaf mold).